The following is a 337-amino-acid chain: Palmitoyltransferase ZDHHC15 (337 aa).

The Cytoplasmic segment spans residues 1 to 20; the sequence is MRRGWKMALSGGLRCCRRVL. A helical membrane pass occupies residues 21–41; it reads SWVPVLVIVLVVLWSYYAYVF. The Lumenal segment spans residues 42–56; that stretch reads ELCLVTVLSPAEKVI. Residues 57-77 traverse the membrane as a helical segment; sequence YLILYHAIFVFFAWTYWKSIF. Residues 78–172 lie on the Cytoplasmic side of the membrane; it reads TLPQQPNQKF…NNCIGFSNYK (95 aa). Residues 129–179 enclose the DHHC domain; the sequence is RFCDRCHLIKPDRCHHCSVCAMCVLKMDHHCPWVNNCIGFSNYKFFLQFLA. 7 residues coordinate Zn(2+): cysteine 131, cysteine 134, histidine 144, cysteine 145, cysteine 148, cysteine 151, and histidine 158. Cysteine 159 (S-palmitoyl cysteine intermediate) is an active-site residue. Position 165 (cysteine 165) interacts with Zn(2+). Residues 173-193 traverse the membrane as a helical segment; that stretch reads FFLQFLAYSVLYCLYIATTVF. The Lumenal portion of the chain corresponds to 194 to 210; the sequence is SYFIKYWRGELPSVRSK. Residues 211–234 traverse the membrane as a helical segment; it reads FHVLFLLFVACMFFVSLVILFGYH. Residues 235–337 lie on the Cytoplasmic side of the membrane; it reads CWLVSRNKTT…SSSLAVESET (103 aa). The tract at residues 293–337 is disordered; sequence HSFPMRSMNESQNPLLANEEPWEDNEDDSRDYPEGSSSLAVESET. Over residues 312–321 the composition is skewed to acidic residues; that stretch reads EPWEDNEDDS. The span at 327 to 337 shows a compositional bias: polar residues; that stretch reads GSSSLAVESET.

The protein belongs to the DHHC palmitoyltransferase family. In terms of processing, autopalmitoylated (in vitro). In terms of tissue distribution, expressed mainly in brain.

Its subcellular location is the golgi apparatus membrane. It localises to the postsynaptic density. It carries out the reaction L-cysteinyl-[protein] + hexadecanoyl-CoA = S-hexadecanoyl-L-cysteinyl-[protein] + CoA. The enzyme catalyses L-cysteinyl-[protein] + tetradecanoyl-CoA = S-tetradecanoyl-L-cysteinyl-[protein] + CoA. The catalysed reaction is L-cysteinyl-[protein] + octadecanoyl-CoA = S-octadecanoyl-L-cysteinyl-[protein] + CoA. With respect to regulation, inhibited by 2-bromopalmitate. Functionally, palmitoyltransferase that catalyzes the addition of palmitate onto various protein substrates. Has no stringent fatty acid selectivity and in addition to palmitate can also transfer onto target proteins myristate from tetradecanoyl-CoA and stearate from octadecanoyl-CoA. Palmitoylates IGF2R and SORT1, promoting their partitioning to an endosomal membrane subdomain where they can interact with the retromer cargo-selective complex. Thereby, regulates retrograde transport from endosomes to the Golgi apparatus of these lysosomal sorting receptors and plays a role in trafficking of lysosomal proteins. In the nervous system, catalyzes the palmitoylation of DLG4/PSD95 and regulates its synaptic clustering and function in synaptogenesis. Could be involved in the differentiation of dopaminergic neurons and the development of the diencephalon. Could also catalyze the palmitoylation of GAP43. Could also palmitoylate DNAJC5 and regulate its localization to the Golgi membrane. Could also palmitoylate FYN as shown in vitro. May palmitoylate CALHM3 subunit of gustatory voltage-gated ion channels and modulate channel gating and kinetics. In Mus musculus (Mouse), this protein is Palmitoyltransferase ZDHHC15.